An 84-amino-acid polypeptide reads, in one-letter code: Acyl carrier protein (84 aa).

A Carrier domain is found at 6 to 81; sequence EEILTGLAEI…DAVDYIANAT (76 aa). An O-(pantetheine 4'-phosphoryl)serine modification is found at S41.

Belongs to the acyl carrier protein (ACP) family. In terms of processing, 4'-phosphopantetheine is transferred from CoA to a specific serine of apo-ACP by AcpS. This modification is essential for activity because fatty acids are bound in thioester linkage to the sulfhydryl of the prosthetic group.

It localises to the cytoplasm. It participates in lipid metabolism; fatty acid biosynthesis. Functionally, carrier of the growing fatty acid chain in fatty acid biosynthesis. The polypeptide is Acyl carrier protein (Acidothermus cellulolyticus (strain ATCC 43068 / DSM 8971 / 11B)).